Here is a 294-residue protein sequence, read N- to C-terminus: Secreted frizzled-related protein 2 (294 aa).

A signal peptide spans 1–24 (MPRGPGSLLLLVLASHCCLGSARG). Positions 34-154 (YKRSNCKPIP…PQDNDLCIPL (121 aa)) constitute an FZ domain. 8 cysteine pairs are disulfide-bonded: C39-C102, C49-C95, C86-C124, C113-C151, C117-C141, C171-C244, C174-C246, and C189-C294. The NTR domain occupies 171 to 294 (CEACKNKNED…ISRSIRKLQC (124 aa)).

This sequence belongs to the secreted frizzled-related protein (sFRP) family.

It localises to the secreted. In terms of biological role, soluble frizzled-related proteins (sFRPS) function as modulators of Wnt signaling through direct interaction with Wnts. They have a role in regulating cell growth and differentiation in specific cell types. SFRP2 may be important for eye retinal development and for myogenesis. The polypeptide is Secreted frizzled-related protein 2 (SFRP2) (Canis lupus familiaris (Dog)).